Consider the following 115-residue polypeptide: Large ribosomal subunit protein bL19 (115 aa).

This sequence belongs to the bacterial ribosomal protein bL19 family.

Functionally, this protein is located at the 30S-50S ribosomal subunit interface and may play a role in the structure and function of the aminoacyl-tRNA binding site. The polypeptide is Large ribosomal subunit protein bL19 (Klebsiella pneumoniae (strain 342)).